The primary structure comprises 115 residues: Meiotically up-regulated gene 42 protein (115 aa).

Its function is as follows. Has a role in meiosis. This Schizosaccharomyces pombe (strain 972 / ATCC 24843) (Fission yeast) protein is Meiotically up-regulated gene 42 protein (mug42).